A 259-amino-acid chain; its full sequence is Acyl-[acyl-carrier-protein]--UDP-N-acetylglucosamine O-acyltransferase (259 aa).

It belongs to the transferase hexapeptide repeat family. LpxA subfamily. In terms of assembly, homotrimer.

The protein resides in the cytoplasm. It catalyses the reaction a (3R)-hydroxyacyl-[ACP] + UDP-N-acetyl-alpha-D-glucosamine = a UDP-3-O-[(3R)-3-hydroxyacyl]-N-acetyl-alpha-D-glucosamine + holo-[ACP]. Its pathway is glycolipid biosynthesis; lipid IV(A) biosynthesis; lipid IV(A) from (3R)-3-hydroxytetradecanoyl-[acyl-carrier-protein] and UDP-N-acetyl-alpha-D-glucosamine: step 1/6. Functionally, involved in the biosynthesis of lipid A, a phosphorylated glycolipid that anchors the lipopolysaccharide to the outer membrane of the cell. The sequence is that of Acyl-[acyl-carrier-protein]--UDP-N-acetylglucosamine O-acyltransferase from Psychrobacter sp. (strain PRwf-1).